The primary structure comprises 427 residues: Anaerobic glycerol-3-phosphate dehydrogenase subunit B (427 aa).

The protein belongs to the anaerobic G-3-P dehydrogenase subunit B family. As to quaternary structure, composed of a catalytic GlpA/B dimer and of membrane bound GlpC. FMN serves as cofactor.

It carries out the reaction a quinone + sn-glycerol 3-phosphate = dihydroxyacetone phosphate + a quinol. The protein operates within polyol metabolism; glycerol degradation via glycerol kinase pathway; glycerone phosphate from sn-glycerol 3-phosphate (anaerobic route): step 1/1. Functionally, conversion of glycerol 3-phosphate to dihydroxyacetone. Uses fumarate or nitrate as electron acceptor. The chain is Anaerobic glycerol-3-phosphate dehydrogenase subunit B from Glaesserella parasuis serovar 5 (strain SH0165) (Haemophilus parasuis).